Consider the following 309-residue polypeptide: tRNA dimethylallyltransferase (309 aa).

Gly-10 to Thr-17 contacts ATP. Residue Thr-12 to Thr-17 participates in substrate binding. The tract at residues Asp-35–Gln-38 is interaction with substrate tRNA.

The protein belongs to the IPP transferase family. Monomer. Requires Mg(2+) as cofactor.

It carries out the reaction adenosine(37) in tRNA + dimethylallyl diphosphate = N(6)-dimethylallyladenosine(37) in tRNA + diphosphate. Its function is as follows. Catalyzes the transfer of a dimethylallyl group onto the adenine at position 37 in tRNAs that read codons beginning with uridine, leading to the formation of N6-(dimethylallyl)adenosine (i(6)A). This chain is tRNA dimethylallyltransferase, found in Clostridium botulinum (strain Eklund 17B / Type B).